The chain runs to 196 residues: Large ribosomal subunit protein eL15 (196 aa).

The tract at residues 155 to 196 (THRGRAERGLTSAGKKGRGQRRKGKGTEKNYPSVQAHDRRGK) is disordered. The span at 169–178 (KKGRGQRRKG) shows a compositional bias: basic residues.

The protein belongs to the eukaryotic ribosomal protein eL15 family.

In Methanocella arvoryzae (strain DSM 22066 / NBRC 105507 / MRE50), this protein is Large ribosomal subunit protein eL15.